The following is a 631-amino-acid chain: MSKVKIGELINTLVNEVEAIDASDRPQGDKTKRIKAAAARYKNALFNDKRKFRGKGLQKRITANTFNAYMSRARKRFDDKLHHSFDKNINKLSEKYPLYSEELSSWLSMPTANIRQHMSSLQSKLKEIMPLAEELSNVRIGSKGSDAKIARLIKKYPDWSFALSDLNSDDWKERRDYLYKLFQQGSALLEELHQLKVNHEVLYHLQLSPAERTSIQQRWADVLREKKRNVVVIDYPTYMQSIYDILNNPATLFSLNTRSGMAPLAFALAAVSGRRMIEIMFQGEFAVSGKYTVNFSGQAKKRSEDKSVTRTIYTLCEAKLFVELLTELRSCSAASDFDEVVKGYGKDDTRSENGRINAILAKAFNPWVKSFFGDDRRVYKDSRAIYARIAYEMFFRVDPRWKNVDEDVFFMEILGHDDENTQLHYKQFKLANFSRTWRPEVGDENTRLVALQKLDDEMPGFARGDAGVRLHETVKQLVEQDPSAKITNSTLRAFKFSPTMISRYLEFAADALGQFVGENGQWQLKIETPAIVLPDEESVETIDEPDDESQDDELDEDEIELDEGGGDEPTEEEGPEEHQPTALKPVFKPAKNNGDGTYKIEFEYDGKHYAWSGPADSPMAAMRSAWETYYS.

Residues Arg-275, Lys-300, Arg-383, and His-416 each coordinate DNA. The Nucleophile role is filled by Tyr-425. The disordered stretch occupies residues 533–592 (LPDEESVETIDEPDDESQDDELDEDEIELDEGGGDEPTEEEGPEEHQPTALKPVFKPAKN). Positions 534–575 (PDEESVETIDEPDDESQDDELDEDEIELDEGGGDEPTEEEGP) are enriched in acidic residues.

This sequence belongs to the Caudoviricetes Protelomerase family. As to quaternary structure, monomer. Homodimer; in presence of DNA.

In terms of biological role, converts the circular intermediates produced by the viral replication and carrying a joined telomere site to a linear DNA molecule with covalently closed hairpin ends. The viral circular DNA is cleaved at a palindromic site called telRL thereby generating a linear prophage plasmid with telomeres. Binds covalently to the 3'-phosphoryl of the cleaved strands. In Escherichia coli (Bacteriophage N15), this protein is Protelomerase.